Reading from the N-terminus, the 587-residue chain is 2-succinyl-5-enolpyruvyl-6-hydroxy-3-cyclohexene-1-carboxylate synthase (587 aa).

The protein belongs to the TPP enzyme family. MenD subfamily. In terms of assembly, homodimer. Mg(2+) is required as a cofactor. The cofactor is Mn(2+). Thiamine diphosphate serves as cofactor.

The enzyme catalyses isochorismate + 2-oxoglutarate + H(+) = 5-enolpyruvoyl-6-hydroxy-2-succinyl-cyclohex-3-ene-1-carboxylate + CO2. It participates in quinol/quinone metabolism; 1,4-dihydroxy-2-naphthoate biosynthesis; 1,4-dihydroxy-2-naphthoate from chorismate: step 2/7. It functions in the pathway cofactor biosynthesis; phylloquinone biosynthesis. Its function is as follows. Catalyzes the thiamine diphosphate-dependent decarboxylation of 2-oxoglutarate and the subsequent addition of the resulting succinic semialdehyde-thiamine pyrophosphate anion to isochorismate to yield 2-succinyl-5-enolpyruvyl-6-hydroxy-3-cyclohexene-1-carboxylate (SEPHCHC). This is 2-succinyl-5-enolpyruvyl-6-hydroxy-3-cyclohexene-1-carboxylate synthase from Prochlorococcus marinus (strain MIT 9301).